Consider the following 172-residue polypeptide: Small ribosomal subunit protein uS5 (172 aa).

Residues 15–78 enclose the S5 DRBM domain; the sequence is LNDKLIFINR…ANAKRNLSRI (64 aa).

Belongs to the universal ribosomal protein uS5 family. In terms of assembly, part of the 30S ribosomal subunit. Contacts proteins S4 and S8.

With S4 and S12 plays an important role in translational accuracy. Functionally, located at the back of the 30S subunit body where it stabilizes the conformation of the head with respect to the body. This is Small ribosomal subunit protein uS5 from Dehalococcoides mccartyi (strain CBDB1).